Reading from the N-terminus, the 1460-residue chain is CLIP-associating protein 1-A (1460 aa).

2 HEAT repeats span residues 87 to 124 (TQLG…QASN) and 163 to 200 (LTLS…HVGE). Positions 237–293 (SDKNFDDEDSVDGNRPSSASSSASSKAPQTARRGVSLGTARRPGPSSAAAKTGGTAK) are disordered. Over residues 279-293 (PGPSSAAAKTGGTAK) the composition is skewed to low complexity. 2 HEAT repeats span residues 407–442 (HGAE…IRHT) and 443–479 (HVPR…EWQT). Disordered stretches follow at residues 545 to 605 (SDSI…IDVN), 640 to 733 (IRTR…RFGI), and 778 to 800 (PYGM…ERSY). A compositionally biased stretch (low complexity) spans 550–569 (SLPQSDRSSSSSQESLNRPL). Residues 571–597 (TKRSPTGSTVSRASSTTSKSTPGSLQR) are compositionally biased toward polar residues. Residues 645–659 (QSSGSTTSTASTPAD) show a composition bias toward low complexity. 2 stretches are compositionally biased toward polar residues: residues 669 to 681 (VSQS…SNSP) and 715 to 724 (QGCSRETSPS). A compositionally biased stretch (low complexity) spans 789-800 (SDASSACSERSY). One copy of the HEAT 5 repeat lies at 942–979 (FIVDQTQTPNLKVKVAILKYIESLARQMDPTDFVNSSE). A disordered region spans residues 1041 to 1084 (LKNSSNSSMGSPSNTIGRTPSRHSSSRASPLTSPTNCSHGGLSP). Residues 1042–1054 (KNSSNSSMGSPSN) show a composition bias toward low complexity. Positions 1066 to 1078 (SRASPLTSPTNCS) are enriched in polar residues. HEAT repeat units lie at residues 1272 to 1309 (LLLE…YAEL) and 1390 to 1427 (GLLQ…YLAQ).

It belongs to the CLASP family.

Its subcellular location is the cytoplasm. It is found in the cytoskeleton. The protein localises to the microtubule organizing center. It localises to the centrosome. The protein resides in the chromosome. Its subcellular location is the centromere. It is found in the kinetochore. The protein localises to the spindle. It localises to the golgi apparatus. The protein resides in the trans-Golgi network. In terms of biological role, microtubule plus-end tracking protein that promotes the stabilization of dynamic microtubules during anaphase. Plays a crucial role in chromatin-induced microtubule formation. May also act at microtubule minus ends. May be involved in the nucleation of noncentrosomal microtubules originating from the trans-Golgi network (TGN). The protein is CLIP-associating protein 1-A (clasp1-a) of Xenopus laevis (African clawed frog).